We begin with the raw amino-acid sequence, 178 residues long: Large ribosomal subunit protein uL6 (178 aa).

It belongs to the universal ribosomal protein uL6 family. In terms of assembly, part of the 50S ribosomal subunit.

Its function is as follows. This protein binds to the 23S rRNA, and is important in its secondary structure. It is located near the subunit interface in the base of the L7/L12 stalk, and near the tRNA binding site of the peptidyltransferase center. This is Large ribosomal subunit protein uL6 from Arthrobacter sp. (strain FB24).